Here is a 1214-residue protein sequence, read N- to C-terminus: Protein charlatan (1214 aa).

3 disordered regions span residues 1–20, 213–238, and 250–284; these read MATLIPVNGGHPAASGQSSN, HVNQQQQQQQQPHQSTPKSKKHRQEH, and SANAAQNLAQSTPTSAPSNSSGGSTSSSGGGGGRK. Residues 258–276 are compositionally biased toward low complexity; sequence AQSTPTSAPSNSSGGSTSS. 2 C2H2-type zinc fingers span residues 305 to 327 and 333 to 356; these read YACTHCPYSTDRRDLYTRHENIH and FQCYACLKQFNRADHVKKHFLRMH. 2 disordered regions span residues 367–397 and 463–488; these read RRHVSAGSGSSGSGSSGSGSHHSGGRGNVTI and PVASSSSGSSGSHGGNGNGGSGSGLL. Residues 473-485 are compositionally biased toward gly residues; sequence GSHGGNGNGGSGS. 2 consecutive C2H2-type zinc fingers follow at residues 496 to 518 and 522 to 545; these read FTCCYCPWSGADKWGLKRHLNTH and FVCLLCDYKAARSERLATHVLKVH. Disordered regions lie at residues 741-790, 848-946, and 1062-1084; these read SASS…ATSP, NDED…SGPS, and LSTPRRSPKKAAPAHSNSASNAS. Low complexity-rich tracts occupy residues 855–871, 885–896, 923–946, and 1071–1084; these read QQHQPHQQHHSQQQQQQ, NNNNNNNSNNNN, SPGTAAVSVAAAAATSPPSISGPS, and KAAPAHSNSASNAS.

In terms of tissue distribution, expressed in the PNS and CNS. In early blastoderm stages, it is ubiquitously expressed, then, before stage 5, it disappears from the poles of the embryo and faint stripes are visible. At stage 5, it also accumulates in the dorsal region, cephalic furrow ectodermal patches between the tracheal pits, where neurons of the PNS appear. In older embryos (stage 15) a strong expression is mostly restricted to the central nervous system (CNS) and PNS. In PNS, the pattern suggests that expression occur in many of the neurons of the ventral, lateral and dorsal clusters of neurons. In third instar wing disks, it is expressed in rows of cells on either side of the prospective anterior wing margin and in groups of cells that coincide with proneural clusters of ac/sc expression. Also expressed independently of ac/sc in certain areas of the disk, such as the postnotum and posterior dorsal proximal wing. Expressed in the proneural clusters of the leg disks and in the eye/antenna disk.

Its subcellular location is the nucleus. Probable transcription factor involved in the development of the adult pattern of macrochaetae. Required for accumulation of achaete (ac) and scute (sc) in proneural clusters. Probably acts by binding to the proneural cluster-specific enhancers of the ac/sc complex and increasing enhancer efficiency, thereby acting as a stimulator of ac/sc expression in proneural clusters. Also required for correct development of the embryonic/larval peripheral nervous system (PNS). This chain is Protein charlatan (chn), found in Drosophila melanogaster (Fruit fly).